The chain runs to 89 residues: UPF0223 protein BCB4264_A4064 (89 aa).

It belongs to the UPF0223 family.

This is UPF0223 protein BCB4264_A4064 from Bacillus cereus (strain B4264).